Reading from the N-terminus, the 609-residue chain is Sporulation-specific protein 21 (609 aa).

Disordered stretches follow at residues 1 to 50 (MDNI…LENS), 68 to 96 (PASK…DGNS), and 124 to 165 (KLDS…SIKG). A compositionally biased stretch (polar residues) spans 10–31 (MEGTSTMTVTSRSSEDSSCISN). Basic and acidic residues predominate over residues 32–43 (HEQDTDTHKDGD). The span at 68–81 (PASKSSRSIGSMKS) shows a compositional bias: low complexity. 2 stretches are compositionally biased toward polar residues: residues 82-96 (NQSL…DGNS) and 127-136 (STGSQRSKNN). Residues 143-159 (SSTTSQTTCSSSSSSSS) show a composition bias toward low complexity. Coiled coils occupy residues 283 to 342 (RTKI…DNES), 357 to 393 (RETL…ATNF), and 424 to 483 (ENLT…LLIE). Residues 586–609 (DQKSNQNSSTPYKQSQRQVPHSIK) form a disordered region. The span at 587-609 (QKSNQNSSTPYKQSQRQVPHSIK) shows a compositional bias: polar residues.

The protein belongs to the MPC70 family. In terms of assembly, interacts directly with MPC54, NUD1 and SPC42. Interacts with ADY3. Interacts with ADY4. Probable component of a SPB complex composed of ADY3, SSP1, DON1, MPC54, SPO21/MPC70, NUD1 and CNM67.

The protein localises to the prospore membrane. It localises to the cytoplasm. Its subcellular location is the cytoskeleton. The protein resides in the spindle pole. Its function is as follows. Involved in the pathway that organizes the shaping and sizing of the prospore membrane (PSM) during sporulation. May provide a meiosis-specific scaffold for the assembly of other proteins on spindle pole bodies (SPBs), and may be a limiting component for SPB formation. In Saccharomyces cerevisiae (strain ATCC 204508 / S288c) (Baker's yeast), this protein is Sporulation-specific protein 21 (SPO21).